A 152-amino-acid polypeptide reads, in one-letter code: Nucleoside diphosphate kinase (152 aa).

Residues Lys-11, Phe-59, Arg-87, Thr-93, Arg-104, and Asn-114 each contribute to the ATP site. His-117 (pros-phosphohistidine intermediate) is an active-site residue.

The protein belongs to the NDK family. In terms of assembly, homotetramer. It depends on Mg(2+) as a cofactor.

The protein resides in the cytoplasm. The enzyme catalyses a 2'-deoxyribonucleoside 5'-diphosphate + ATP = a 2'-deoxyribonucleoside 5'-triphosphate + ADP. The catalysed reaction is a ribonucleoside 5'-diphosphate + ATP = a ribonucleoside 5'-triphosphate + ADP. Major role in the synthesis of nucleoside triphosphates other than ATP. The ATP gamma phosphate is transferred to the NDP beta phosphate via a ping-pong mechanism, using a phosphorylated active-site intermediate. The chain is Nucleoside diphosphate kinase from Prochlorococcus marinus subsp. pastoris (strain CCMP1986 / NIES-2087 / MED4).